The chain runs to 201 residues: UPF0301 protein MAP_0045 (201 aa).

Belongs to the UPF0301 (AlgH) family.

The protein is UPF0301 protein MAP_0045 of Mycolicibacterium paratuberculosis (strain ATCC BAA-968 / K-10) (Mycobacterium paratuberculosis).